A 245-amino-acid chain; its full sequence is tRNA pseudouridine synthase A 2 (245 aa).

The active-site Nucleophile is the D53. Y111 is a binding site for substrate.

The protein belongs to the tRNA pseudouridine synthase TruA family. Homodimer.

The catalysed reaction is uridine(38/39/40) in tRNA = pseudouridine(38/39/40) in tRNA. Formation of pseudouridine at positions 38, 39 and 40 in the anticodon stem and loop of transfer RNAs. This chain is tRNA pseudouridine synthase A 2, found in Bacillus cereus (strain ATCC 14579 / DSM 31 / CCUG 7414 / JCM 2152 / NBRC 15305 / NCIMB 9373 / NCTC 2599 / NRRL B-3711).